Reading from the N-terminus, the 121-residue chain is ORF8 protein (121 aa).

An N-terminal signal peptide occupies residues 1–15 (MKFLVFLGIITTVAA). An SARS ORF8 Ig-like domain is found at 19-121 (ECSLQSCTQH…HDVRVVLDFI (103 aa)). 3 cysteine pairs are disulfide-bonded: Cys25/Cys90, Cys37/Cys102, and Cys61/Cys83. Asn78 carries an N-linked (GlcNAc...) (complex) asparagine; by host glycan.

Homodimer. Interacts with host IL17RA. Interacts with host IL17RC. Interacts with host MHC-I. In terms of processing, glycosylated by the host when secreted via the conventional pathway. The glycosylated form cannot bind IL17A and would not participate in the cytokine storm.

The protein localises to the secreted. Its function is as follows. Plays a role in modulating the host immune response. May act as a secreted virokine by mimicking interleukin-17A (IL17A), and thereby binding to the IL17RA receptor, leading to activation of the IL17 pathway and increased secretion of pro-inflammatory factors. Contributes to the cytokine storm during SARS-CoV-2 infection when secreted by unconventional pathway. May act by down-regulating major histocompability complex class I (MHC-I) at cell surface. May inhibit expression of some members of the IFN-stimulated gene (ISG) family including hosts IGF2BP1/ZBP1, MX1 and MX2, and DHX58. The polypeptide is ORF8 protein (Severe acute respiratory syndrome coronavirus 2 (2019-nCoV)).